Reading from the N-terminus, the 123-residue chain is Alpha-lactalbumin A (123 aa).

The region spanning 1-123 is the C-type lysozyme domain; it reads KQFTKCELSQ…KLEQWLCEEL (123 aa). Cystine bridges form between cysteine 6-cysteine 120, cysteine 28-cysteine 111, cysteine 61-cysteine 77, and cysteine 73-cysteine 91. Residues lysine 79, aspartate 82, aspartate 84, aspartate 87, and aspartate 88 each contribute to the Ca(2+) site.

This sequence belongs to the glycosyl hydrolase 22 family. In terms of assembly, lactose synthase (LS) is a heterodimer of a catalytic component, beta1,4-galactosyltransferase (beta4Gal-T1) and a regulatory component, alpha-lactalbumin (LA). Mammary gland specific. Secreted in milk.

Its subcellular location is the secreted. In terms of biological role, regulatory subunit of lactose synthase, changes the substrate specificity of galactosyltransferase in the mammary gland making glucose a good acceptor substrate for this enzyme. This enables LS to synthesize lactose, the major carbohydrate component of milk. In other tissues, galactosyltransferase transfers galactose onto the N-acetylglucosamine of the oligosaccharide chains in glycoproteins. The sequence is that of Alpha-lactalbumin A from Equus caballus (Horse).